The chain runs to 207 residues: Large ribosomal subunit protein uL3 (207 aa).

The protein belongs to the universal ribosomal protein uL3 family. In terms of assembly, part of the 50S ribosomal subunit. Forms a cluster with proteins L14 and L19.

Its function is as follows. One of the primary rRNA binding proteins, it binds directly near the 3'-end of the 23S rRNA, where it nucleates assembly of the 50S subunit. This Desulforapulum autotrophicum (strain ATCC 43914 / DSM 3382 / VKM B-1955 / HRM2) (Desulfobacterium autotrophicum) protein is Large ribosomal subunit protein uL3.